Consider the following 327-residue polypeptide: Dolichyl-phosphate beta-glucosyltransferase ALG5D (327 aa).

The Lumenal segment spans residues 1–6 (MEKQLA). Residues 7-27 (ELSVYILIIFLILGFIMAILM) traverse the membrane as a helical segment. Topologically, residues 28 to 327 (RFGDDTTLFD…NIWTIRDRKF (300 aa)) are cytoplasmic.

It belongs to the glycosyltransferase 2 family.

It localises to the endoplasmic reticulum membrane. The catalysed reaction is a di-trans,poly-cis-dolichyl phosphate + UDP-alpha-D-glucose = a di-trans,poly-cis-dolichyl beta-D-glucosyl phosphate + UDP. The protein operates within protein modification; protein glycosylation. Dolichyl-phosphate beta-glucosyltransferase involved in the glycosylation of glycoproteins through the synthesis of dolichyl beta-D-glucosyl phosphate which serves as a sugar donor for transfer of three glucose residues to the Man-9-GlcNAc-2-PP-dolichol precursor to N-glycans. The protein is Dolichyl-phosphate beta-glucosyltransferase ALG5D of Trichomonas vaginalis (strain ATCC PRA-98 / G3).